Consider the following 263-residue polypeptide: Antigen 10-3 (263 aa).

Positions 1 to 21 (MNIYLIGILCIVGLIISQGST) are cleaved as a signal peptide. A disordered region spans residues 70–207 (GNKKDKQPTQ…QINDGTSDKP (138 aa)). Residues 78–90 (TQKTTPKPTTPKQ) are compositionally biased toward low complexity. 5 tandem repeats follow at residues 81–107 (TTPK…TIKR), 108–134 (TTPK…TIKR), 135–161 (TTPK…TIKR), 162–188 (TTPK…TIKR), and 189–206 (TTPK…TSDK). The 5 X 27 AA tandem repeats stretch occupies residues 81-189 (TTPKPTTPKQ…TSDTHTIKRT (109 aa)). Basic and acidic residues-rich tracts occupy residues 95–104 (TSDKTSDTHT), 122–131 (TSDKTSDTHT), 149–158 (TSDKTSDTHT), and 176–185 (TSDKTSDTHT).

This chain is Antigen 10-3, found in Schistosoma mansoni (Blood fluke).